Consider the following 431-residue polypeptide: MNTLDWTQLTADARTQALTRPVQTVATQTREAVATLIADVRARGDVALREITARFDGVTLESFAVSDAEFAAADAAIAPELRQAMQDAVARIDTFHRAGMSEGYAVETAPGVVCEKIVRPIGRVGLYVPAGSAPLPSTALMLGVPARLAGCREVVLCTPPRKDGSVDPAVLVAAQLTGVRRVFKLGGAQAIAAMAYGTDSIPSCDKLFGPGNSFVTEAKQQVAQSGAAAIDMPAGPSEVLVIADAGAQPAFVAADLLSQAEHGPDSQVLLLSDSDALITAVQEQLDLQLAQLSRADIARQALAQSRLIKVATLQDAFEISNRYAPEHLILALREPRAWLAQVEAAGSVFLGDYTPEALGDYCSGTNHVLPTSGAARAYSGVSVASFQNMVSVQAASKAGIDGIGACAVILARAEGLDAHANAVALRMGVAA.

Residues Tyr-127, Gln-189, and Asn-212 each coordinate NAD(+). Residues Ser-237, Gln-259, and His-262 each coordinate substrate. Positions 259 and 262 each coordinate Zn(2+). Active-site proton acceptor residues include Glu-326 and His-327. Positions 327, 360, 414, and 419 each coordinate substrate. A Zn(2+)-binding site is contributed by Asp-360. His-419 is a Zn(2+) binding site.

The protein belongs to the histidinol dehydrogenase family. Zn(2+) serves as cofactor.

It catalyses the reaction L-histidinol + 2 NAD(+) + H2O = L-histidine + 2 NADH + 3 H(+). Its pathway is amino-acid biosynthesis; L-histidine biosynthesis; L-histidine from 5-phospho-alpha-D-ribose 1-diphosphate: step 9/9. In terms of biological role, catalyzes the sequential NAD-dependent oxidations of L-histidinol to L-histidinaldehyde and then to L-histidine. The chain is Histidinol dehydrogenase from Xanthomonas campestris pv. campestris (strain ATCC 33913 / DSM 3586 / NCPPB 528 / LMG 568 / P 25).